The sequence spans 322 residues: tRNA U34 carboxymethyltransferase (322 aa).

Residues Lys-91, Trp-105, Lys-110, Gly-129, 179-180 (LE), Met-195, Tyr-199, and Arg-314 contribute to the carboxy-S-adenosyl-L-methionine site.

It belongs to the class I-like SAM-binding methyltransferase superfamily. CmoB family. Homotetramer.

It carries out the reaction carboxy-S-adenosyl-L-methionine + 5-hydroxyuridine(34) in tRNA = 5-carboxymethoxyuridine(34) in tRNA + S-adenosyl-L-homocysteine + H(+). In terms of biological role, catalyzes carboxymethyl transfer from carboxy-S-adenosyl-L-methionine (Cx-SAM) to 5-hydroxyuridine (ho5U) to form 5-carboxymethoxyuridine (cmo5U) at position 34 in tRNAs. This chain is tRNA U34 carboxymethyltransferase, found in Pseudomonas aeruginosa (strain LESB58).